The following is a 339-amino-acid chain: Ketol-acid reductoisomerase (NADP(+)) (339 aa).

The region spanning 1–182 (MRVYYDRDAD…GGGRSGIIET (182 aa)) is the KARI N-terminal Rossmann domain. NADP(+) contacts are provided by residues 24–27 (YGSQ), arginine 48, serine 51, threonine 53, and 83–86 (DEHQ). Histidine 108 is an active-site residue. Glycine 134 is an NADP(+) binding site. The KARI C-terminal knotted domain occupies 183-328 (NFREECETDL…ARLRGMMPWI (146 aa)). Mg(2+)-binding residues include aspartate 191, glutamate 195, glutamate 227, and glutamate 231. Serine 252 contributes to the substrate binding site.

It belongs to the ketol-acid reductoisomerase family. The cofactor is Mg(2+).

It carries out the reaction (2R)-2,3-dihydroxy-3-methylbutanoate + NADP(+) = (2S)-2-acetolactate + NADPH + H(+). The catalysed reaction is (2R,3R)-2,3-dihydroxy-3-methylpentanoate + NADP(+) = (S)-2-ethyl-2-hydroxy-3-oxobutanoate + NADPH + H(+). The protein operates within amino-acid biosynthesis; L-isoleucine biosynthesis; L-isoleucine from 2-oxobutanoate: step 2/4. It functions in the pathway amino-acid biosynthesis; L-valine biosynthesis; L-valine from pyruvate: step 2/4. Functionally, involved in the biosynthesis of branched-chain amino acids (BCAA). Catalyzes an alkyl-migration followed by a ketol-acid reduction of (S)-2-acetolactate (S2AL) to yield (R)-2,3-dihydroxy-isovalerate. In the isomerase reaction, S2AL is rearranged via a Mg-dependent methyl migration to produce 3-hydroxy-3-methyl-2-ketobutyrate (HMKB). In the reductase reaction, this 2-ketoacid undergoes a metal-dependent reduction by NADPH to yield (R)-2,3-dihydroxy-isovalerate. The polypeptide is Ketol-acid reductoisomerase (NADP(+)) (Caulobacter sp. (strain K31)).